A 172-amino-acid chain; its full sequence is Small ribosomal subunit protein uS5c (172 aa).

The 64-residue stretch at 15-78 (WEEKVVQVKR…TDAKKHIINV (64 aa)) folds into the S5 DRBM domain.

This sequence belongs to the universal ribosomal protein uS5 family. Part of the 30S ribosomal subunit. Contacts protein S4.

Its subcellular location is the plastid. The protein localises to the chloroplast. With S4 and S12 plays an important role in translational accuracy. The sequence is that of Small ribosomal subunit protein uS5c (rps5) from Gracilaria tenuistipitata var. liui (Red alga).